Reading from the N-terminus, the 442-residue chain is tRNA-2-methylthio-N(6)-dimethylallyladenosine synthase (442 aa).

Positions 2 to 120 (KKVFIRTFGC…LPKMIVDKET (119 aa)) constitute an MTTase N-terminal domain. [4Fe-4S] cluster-binding residues include Cys11, Cys49, Cys83, Cys157, Cys161, and Cys164. The region spanning 143 to 375 (RVEGGAAFVS…NEVIEAETAR (233 aa)) is the Radical SAM core domain. Residues 378–441 (QTMVGTVQRC…TFSLRGKVVE (64 aa)) form the TRAM domain.

Belongs to the methylthiotransferase family. MiaB subfamily. As to quaternary structure, monomer. [4Fe-4S] cluster is required as a cofactor.

It localises to the cytoplasm. The enzyme catalyses N(6)-dimethylallyladenosine(37) in tRNA + (sulfur carrier)-SH + AH2 + 2 S-adenosyl-L-methionine = 2-methylsulfanyl-N(6)-dimethylallyladenosine(37) in tRNA + (sulfur carrier)-H + 5'-deoxyadenosine + L-methionine + A + S-adenosyl-L-homocysteine + 2 H(+). Catalyzes the methylthiolation of N6-(dimethylallyl)adenosine (i(6)A), leading to the formation of 2-methylthio-N6-(dimethylallyl)adenosine (ms(2)i(6)A) at position 37 in tRNAs that read codons beginning with uridine. The sequence is that of tRNA-2-methylthio-N(6)-dimethylallyladenosine synthase from Neisseria meningitidis serogroup B (strain ATCC BAA-335 / MC58).